The chain runs to 225 residues: Rho GDP-dissociation inhibitor 3 (225 aa).

The protein belongs to the Rho GDI family.

It localises to the cytoplasm. Functionally, inhibits GDP/GTP exchange reaction of RhoB. Interacts specifically with the GDP- and GTP-bound forms of post-translationally processed Rhob and Rhog proteins, both of which show a growth-regulated expression in mammalian cells. Stimulates the release of the GDP-bound but not the GTP-bound RhoB protein. Also inhibits the GDP/GTP exchange of RhoB but shows less ability to inhibit the dissociation of prebound GTP. This is Rho GDP-dissociation inhibitor 3 (ARHGDIG) from Bos taurus (Bovine).